We begin with the raw amino-acid sequence, 390 residues long: tRNA-specific 2-thiouridylase MnmA (390 aa).

ATP is bound by residues G29–S36 and L55. The active-site Nucleophile is C116. C116 and C225 form a disulfide bridge. G141 lines the ATP pocket. The interaction with tRNA stretch occupies residues K175–Q177. Catalysis depends on C225, which acts as the Cysteine persulfide intermediate. The interval R330–Y331 is interaction with tRNA.

This sequence belongs to the MnmA/TRMU family.

The protein localises to the cytoplasm. The catalysed reaction is S-sulfanyl-L-cysteinyl-[protein] + uridine(34) in tRNA + AH2 + ATP = 2-thiouridine(34) in tRNA + L-cysteinyl-[protein] + A + AMP + diphosphate + H(+). In terms of biological role, catalyzes the 2-thiolation of uridine at the wobble position (U34) of tRNA, leading to the formation of s(2)U34. In Prochlorococcus marinus (strain MIT 9515), this protein is tRNA-specific 2-thiouridylase MnmA.